Here is an 86-residue protein sequence, read N- to C-terminus: Small ribosomal subunit protein uS15 (86 aa).

The protein belongs to the universal ribosomal protein uS15 family. As to quaternary structure, part of the 30S ribosomal subunit. Forms a bridge to the 50S subunit in the 70S ribosome, contacting the 23S rRNA.

Its function is as follows. One of the primary rRNA binding proteins, it binds directly to 16S rRNA where it helps nucleate assembly of the platform of the 30S subunit by binding and bridging several RNA helices of the 16S rRNA. In terms of biological role, forms an intersubunit bridge (bridge B4) with the 23S rRNA of the 50S subunit in the ribosome. The polypeptide is Small ribosomal subunit protein uS15 (Endomicrobium trichonymphae).